We begin with the raw amino-acid sequence, 526 residues long: Zinc finger protein 69 homolog (526 aa).

In terms of domain architecture, SCAN box spans 1 to 39; sequence MPQQLLITLPTEASTWVKLQHPKKAVEGAPLWEDVTKMF. Residues 76–147 enclose the KRAB domain; the sequence is LTFKDISIDF…EKEGPGDPSS (72 aa). C2H2-type zinc fingers lie at residues 271–293, 299–321, 327–349, 355–377, 383–405, 411–433, 439–461, 467–489, and 495–517; these read YECN…MRIH, FRCK…QRIH, FECE…HRTH, YVCD…LRTH, FTCN…IRIH, YACT…QRIH, YKCK…KTVH, YECN…QRHH, and YECN…HEIH.

It belongs to the krueppel C2H2-type zinc-finger protein family. In terms of tissue distribution, expressed in visceral and subcutaneous adipose tissue.

It is found in the nucleus. In terms of biological role, putative transcription factor that appears to regulate lipid metabolism. The polypeptide is Zinc finger protein 69 homolog (ZFP69) (Homo sapiens (Human)).